A 908-amino-acid polypeptide reads, in one-letter code: MKIISPVLSNLVFSRSIKVLLCLLWIGYSQGTTHVLRFGGIFEYVESGPMGAEELAFRFAVNTINRNRTLLPNTTLTYDTQKINLYDSFEASKKACDQLSLGVAAIFGPSHSSSANAVQSICNALGVPHIQTRWKHQVSDNKDSFYVSLYPDFSSLSRAILDLVQFFKWKTVTVVYDDSTGLIRLQELIKAPSRYNLRLKIRQLPADTKDAKPLLKEMKRGKEFHVIFDCSHEMAAGILKQALAMGMMTEYYHYIFTTLDLFALDVEPYRYSGVNMTGFRILNTENTQVSSIIEKWSMERLQAPPKPDSGLLDGFMTTDAALMYDAVHVVSVAVQQFPQMTVSSLQCNRHKPWRFGTRFMSLIKEAHWEGLTGRITFNKTNGLRTDFDLDVISLKEEGLEKIGTWDPSSGLNMTESQKGKPANITDSLSNRSLIVTTILEEPYVLFKKSDKPLYGNDRFEGYCIDLLRELSTILGFTYEIRLVEDGKYGAQDDVNGQWNGMVRELIDHKADLAVAPLAITYVREKVIDFSKPFMTLGISILYRKPNGTNPGVFSFLNPLSPDIWMYILLAYLGVSCVLFVIARFSPYEWYNPHPCNPDSDVVENNFTLLNSFWFGVGALMQQGSELMPKALSTRIVGGIWWFFTLIIISSYTANLAAFLTVERMESPIDSADDLAKQTKIEYGAVEDGATMTFFKKSKISTYDKMWAFMSSRRQSVLVKSNEEGIQRVLTSDYAFLMESTTIEFVTQRNCNLTQIGGLIDSKGYGVGTPMGSPYRDKITIAILQLQEEGKLHMMKEKWWRGNGCPEEESKEASALGVQNIGGIFIVLAAGLVLSVFVAVGEFLYKSKKNAQLEKRSFCSAMVEELRMSLKCQRRLKHKPQAPVIVKTEEVINMHTFNDRRLPGKETMA.

Residues 1-31 (MKIISPVLSNLVFSRSIKVLLCLLWIGYSQG) form the signal peptide. Residues 32 to 561 (TTHVLRFGGI…VFSFLNPLSP (530 aa)) are Extracellular-facing. 7 N-linked (GlcNAc...) asparagine glycosylation sites follow: Asn-67, Asn-73, Asn-275, Asn-378, Asn-412, Asn-423, and Asn-430. Cys-96 and Cys-347 are disulfide-bonded. Positions 516, 518, and 523 each coordinate L-glutamate. An N-linked (GlcNAc...) asparagine glycan is attached at Asn-546. The chain crosses the membrane as a helical span at residues 562-582 (DIWMYILLAYLGVSCVLFVIA). Residues 583 to 638 (RFSPYEWYNPHPCNPDSDVVENNFTLLNSFWFGVGALMQQGSELMPKALSTRIVGG) are Cytoplasmic-facing. A helical membrane pass occupies residues 639–659 (IWWFFTLIIISSYTANLAAFL). Over 660-819 (TVERMESPID…KEASALGVQN (160 aa)) the chain is Extracellular. L-glutamate-binding residues include Ala-689, Thr-690, and Glu-738. Cysteines 750 and 804 form a disulfide. Residue Asn-751 is glycosylated (N-linked (GlcNAc...) asparagine). Residues 820 to 840 (IGGIFIVLAAGLVLSVFVAVG) traverse the membrane as a helical segment. Residues 841-908 (EFLYKSKKNA…RRLPGKETMA (68 aa)) are Cytoplasmic-facing. Phosphoserine; by PKC is present on residues Ser-846 and Ser-868. Lys-886 participates in a covalent cross-link: Glycyl lysine isopeptide (Lys-Gly) (interchain with G-Cter in SUMO1).

It belongs to the glutamate-gated ion channel (TC 1.A.10.1) family. GRIK2 subfamily. Homotetramer and heterotetramer with GRIK5. Tetramers may be formed by the dimerization of dimers. Assembles into a kainate-gated homomeric channel that does not bind AMPA. Can form functional heteromeric receptors with GRIK3. Forms a heteromeric complex with GRIK4 and GRIK5. Interacts with DLG4. Interacts (via C-terminus) with KLHL17 (via kelch repeats); the interaction targets GRIK2 for degradation via ubiquitin-proteasome pathway. Interacts with NETO2. Sumoylation mediates kainate receptor-mediated endocytosis and regulates synaptic transmission. Sumoylation is enhanced by PIAS3 and desumoylated by SENP1. Post-translationally, ubiquitinated. Ubiquitination regulates the GRIK2 levels at the synapse by leading kainate receptor degradation through proteasome. In terms of processing, phosphorylated by PKC at Ser-868 upon agonist activation, this directly enhance sumoylation. Expressed in the hippocampal mossy fiber synapses (at protein level). Most abundant in the cerebellum and the hypothalamus. Expressed in a proportion of dorsal root ganglion (DRG) neurons (13.6%); predominantly small diameter DRG neurons (75%) with the remainder expressed in medium diameter DRG neurons.

Its subcellular location is the cell membrane. It localises to the postsynaptic cell membrane. The catalysed reaction is Ca(2+)(in) = Ca(2+)(out). It catalyses the reaction Na(+)(in) = Na(+)(out). With respect to regulation, cold receptor activity activated by temperatures between 10-19 degrees Celsius. Its function is as follows. Ionotropic glutamate receptor that functions as a cation-permeable ligand-gated ion channel, gated by L-glutamate and the glutamatergic agonist kainic acid. L-glutamate acts as an excitatory neurotransmitter at many synapses in the central nervous system. Binding of the excitatory neurotransmitter L-glutamate induces a conformation change, leading to the opening of the cation channel, and thereby converts the chemical signal to an electrical impulse. The receptor then desensitizes rapidly and enters a transient inactive state, characterized by the presence of bound agonist. Modulates cell surface expression of NETO2. In association with GRIK3, involved in presynaptic facilitation of glutamate release at hippocampal mossy fiber synapses. Independent of its ionotropic glutamate receptor activity, acts as a thermoreceptor conferring sensitivity to cold temperatures. Functions in dorsal root ganglion neurons. In terms of biological role, ionotropic glutamate receptor that functions as a cation-permeable ligand-gated ion channel, gated by L-glutamate and the glutamatergic agonist kainic acid. The chain is Glutamate receptor ionotropic, kainate 2 (Grik2) from Mus musculus (Mouse).